The sequence spans 183 residues: uncharacterized protein (183 aa).

The next 4 membrane-spanning stretches (helical) occupy residues K13–S35, L60–F82, F117–F139, and L149–S171.

It localises to the cell membrane. This is an uncharacterized protein from Archaeoglobus fulgidus (strain ATCC 49558 / DSM 4304 / JCM 9628 / NBRC 100126 / VC-16).